Reading from the N-terminus, the 591-residue chain is F420 non-reducing hydrogenase II large subunit (591 aa).

Glutamate 42 provides a ligand contact to Mg(2+). The Ni(2+) site is built by cysteine 61, cysteine 64, cysteine 569, and cysteine 572. Cysteine 64 contacts Fe cation. Fe cation is bound at residue cysteine 572. Mg(2+) is bound at residue histidine 575.

Belongs to the [NiFe]/[NiFeSe] hydrogenase large subunit family. Composed of a large subunit (VhtA), a small subunit (VhtG) and a cytochrome subunit (VhtC). Requires Ni(2+) as cofactor. Fe cation is required as a cofactor.

Its subcellular location is the cell membrane. It catalyses the reaction methanophenazine + H2 = dihydromethanophenazine. Functionally, part of the F420 non-reducing hydrogenase II complex that catalyzes the reduction of methanophenazine to dihydromethanophenazine. The protein is F420 non-reducing hydrogenase II large subunit of Methanosarcina mazei (strain ATCC BAA-159 / DSM 3647 / Goe1 / Go1 / JCM 11833 / OCM 88) (Methanosarcina frisia).